Here is a 900-residue protein sequence, read N- to C-terminus: Zinc finger protein 62 homolog (900 aa).

Residues 1 to 97 are disordered; sequence MSHLKTSTED…EASEKSLHLS (97 aa). A Glycyl lysine isopeptide (Lys-Gly) (interchain with G-Cter in SUMO2) cross-link involves residue Lys5. Positions 9-18 are enriched in acidic residues; the sequence is EDEEPTEEYE. The segment covering 47-73 has biased composition (basic and acidic residues); sequence SKVENQQKKPVENRMKEDKSSIREAIS. Glycyl lysine isopeptide (Lys-Gly) (interchain with G-Cter in SUMO2) cross-links involve residues Lys48, Lys62, Lys65, Lys82, and Lys92. Residues 83 to 94 show a composition bias toward basic and acidic residues; sequence TEQEGEASEKSL. 13 consecutive C2H2-type zinc fingers follow at residues 225-247, 253-275, 281-303, 309-331, 337-359, 365-387, 393-415, 421-443, 449-471, 477-499, 505-527, 533-555, and 561-583; these read CKCDECGKSFNYSSVLDQHKRIH, YECGECGKAFRNSSGLRVHKRIH, YECDICGKTFSNSSGLRVHKRIH, YECDECGKAFITCRTLLNHKSIH, YKCDECEKSFNYSSLLIQHKVIH, YECDECGKAFRNSSGLIVHKRIH, YKCDVCGKAFSYSSGLAVHKSIH, HECKECGKSFSYNSLLLQHRTIH, YVCDVCGKTFRNNAGLKVHRRLH, YKCDVCGKAYISRSSLKNHKGIH, YKCSYCEKSFNYSSALEQHKRIH, FGCDECGKAFRNNSGLKVHKRIH, and YKCEECGKAYISLSSLINHKSVH. Lys587 is covalently cross-linked (Glycyl lysine isopeptide (Lys-Gly) (interchain with G-Cter in SUMO2)). 10 C2H2-type zinc fingers span residues 589–611, 617–639, 645–667, 673–695, 701–723, 729–751, 757–779, 785–807, 813–834, and 840–862; these read FKCDECEKAFITYRTLTNHKKVH, YKCDVCEKSFNYTSLLSQHRRVH, YECDRCEKVFRNNSSLKVHKRIH, YECDVCGKAYISHSSLINHKSTH, HTCDECGKAFFSSRTLISHKRVH, FKCVECGKSFSYSSLLSQHKRIH, YVCDRCGKAFRNSSGLTVHKRIH, YECDECGKAYISHSSLINHKSVH, YNCECGKSFNYRSVLDQHKRIH, and YRCNECGKAFNIRSNLTKHKRTH. A Glycyl lysine isopeptide (Lys-Gly) (interchain with G-Cter in SUMO2) cross-link involves residue Lys748. Lys882 is covalently cross-linked (Glycyl lysine isopeptide (Lys-Gly) (interchain with G-Cter in SUMO2)).

It belongs to the krueppel C2H2-type zinc-finger protein family.

The protein localises to the nucleus. In terms of biological role, may play a role in differentiating skeletal muscle. The polypeptide is Zinc finger protein 62 homolog (ZFP62) (Homo sapiens (Human)).